Reading from the N-terminus, the 198-residue chain is Acireductone dioxygenase 2 (198 aa).

Fe(2+) is bound by residues His99, His101, Glu105, and His144. Residues His99, His101, Glu105, and His144 each coordinate Ni(2+).

Belongs to the acireductone dioxygenase (ARD) family. The cofactor is Fe(2+). Ni(2+) serves as cofactor. As to expression, ubiquitous.

It is found in the cytoplasm. The protein localises to the nucleus. It carries out the reaction 1,2-dihydroxy-5-(methylsulfanyl)pent-1-en-3-one + O2 = 4-methylsulfanyl-2-oxobutanoate + formate + 2 H(+). The catalysed reaction is 1,2-dihydroxy-5-(methylsulfanyl)pent-1-en-3-one + O2 = 3-(methylsulfanyl)propanoate + CO + formate + 2 H(+). It functions in the pathway amino-acid biosynthesis; L-methionine biosynthesis via salvage pathway; L-methionine from S-methyl-5-thio-alpha-D-ribose 1-phosphate: step 5/6. In terms of biological role, catalyzes 2 different reactions between oxygen and the acireductone 1,2-dihydroxy-3-keto-5-methylthiopentene (DHK-MTPene) depending upon the metal bound in the active site. Fe-containing acireductone dioxygenase (Fe-ARD) produces formate and 2-keto-4-methylthiobutyrate (KMTB), the alpha-ketoacid precursor of methionine in the methionine recycle pathway. Ni-containing acireductone dioxygenase (Ni-ARD) produces methylthiopropionate, carbon monoxide and formate, and does not lie on the methionine recycle pathway. The sequence is that of Acireductone dioxygenase 2 (ARD2) from Oryza sativa subsp. indica (Rice).